Reading from the N-terminus, the 455-residue chain is Post-transcriptional regulator MTA (455 aa).

Positions 17 to 163 (DSVSSSEFDE…QVNCQRQDDD (147 aa)) are disordered. A compositionally biased stretch (acidic residues) spans 23-42 (EFDESRDDETDAPTLEDEQL). Low complexity predominate over residues 88–98 (SPLSRPRSPSP). Short sequence motifs (nuclear localization signal) lie at residues 101-107 (RYGKKIK), 121-130 (KRPRRRPRDR), and 143-152 (RAAPKRATRR). Zn(2+)-binding residues include Cys-333, His-423, Cys-427, and Cys-432. Residues 333–432 (CVFDKQSELA…HHSLCRNSEC (100 aa)) form a CHC2-type zinc finger.

Belongs to the HHV-1 ICP27 protein family. As to quaternary structure, homodimer. Homodimerization is required for transactivation. Interacts with host ALYREF. Associates in a complex with RNA, and host export factors NXF1/TAP and ALYREF; these interactions allow nuclear export of viral transcripts. Interacts with protein K-bZIP/K8; this interaction promotes viral gene expression during lytic infection. Interacts with host PABPC1. Interacts with host AGO2 and TNRC6A; these interactions inhibit host P-body formation. Interacts with PRKRA and EIF2AK2/PKR; these interactions inhibit host stress granule formation. Proteolytically cleaved by host caspase-7 (CASP7), leading to its inactivation, thereby preventing expression of viral lytic genes.

The protein localises to the host cytoplasm. Its subcellular location is the host nucleus. Post-transcriptional regulator that plays an essential role in the expression of viral lytic genes and productive viral replication. Possesses numerous activities that promote the expression of viral genes including enhancement of RNA stability, promotion of RNA splicing and stimulation of protein translation often via its ability to interact with different cellular cofactors. Stabilizes polyadenylated nuclear (PAN) RNA by cooperative binding to a 9-nt core of the MRE (MTA responsive element) together with host PABPC1. Functions as a viral splicing factor and promotes expression of intron-containing viral lytic genes. Protects viral transcripts from specific nuclear RNA decay pathways by preventing host MTREX recruitment that promotes unwinding and degradation of structured RNA substrates. Plays a role in the inhibition of host P-body formation by altering the scaffolding activity of TNRC6A at the initial stage thereby enhancing virus production. Also inhibits host stress granule formation by blocking autophosphorylation of EIF2AK2/PKR and its subsequent binding to dsRNA. This Human herpesvirus 8 type P (isolate GK18) (HHV-8) protein is Post-transcriptional regulator MTA.